Consider the following 435-residue polypeptide: Matrix extracellular phosphoglycoprotein (435 aa).

The signal sequence occupies residues 1-16; sequence MQAVSVGLFLFSMTWA. A glycan (N-linked (GlcNAc...) asparagine) is linked at Asn71. Disordered regions lie at residues 124 to 145 and 166 to 435; these read LLQN…THYL and LLVR…SSGD. Positions 164–186 are dentonin; that stretch reads PDLLVRGDNDVPPFSGDGQHFMH. The Cell attachment site motif lies at 169–171; it reads RGD. Ser178 is a glycosylation site (O-linked (Xyl...) (chondroitin sulfate) serine). Basic and acidic residues-rich tracts occupy residues 267-278 and 300-313; these read KFRELPGKEGNR and SKEK…EHTG. The span at 337–346 shows a compositional bias: polar residues; sequence GNQVTLTESQ. Composition is skewed to basic residues over residues 382–391 and 405–415; these read AHRRTSHPTR and RRPHPHRRVST. Positions 418-435 are ASARM motif; interaction with PHEX; sequence RDSSESSSSGSSSESSGD. Residues 422–435 show a composition bias toward low complexity; that stretch reads ESSSSGSSSESSGD.

The protein belongs to the PF07175/osteoregulin family. In terms of assembly, interacts (via ASARM motif) with PHEX; the interaction is zinc-dependent. In terms of processing, phosphorylated on serine residues in the ASARM motif; the phosphorylation is important for the inhibition of bone mineralization. Cleaved by CTSB/cathepsin B; the cleavage is blocked by metalloprotease PHEX. As to expression, expressed in osteoblasts and osteocytes.

Its subcellular location is the secreted. It localises to the extracellular space. It is found in the extracellular matrix. Functionally, regulates renal phosphate excretion. Regulates bone mineralization by osteoblasts and cartilage mineralization by chondrocytes. Regulates the mineralization of the extracellular matrix of the craniofacial complex, such as teeth, bone and cartilage. Increases dental pulp stem cell proliferation. In Rattus norvegicus (Rat), this protein is Matrix extracellular phosphoglycoprotein.